A 1764-amino-acid chain; its full sequence is Cilia- and flagella-associated protein 44 (1764 aa).

7 WD repeats span residues 115 to 157 (GTER…IVLR), 160 to 199 (AFSQDVYGVAFSPYFEGQLTTSGQGHIRFWRMASTFTGLK), 208 to 248 (GNVE…VVLT), 255 to 294 (CHDGPIEALLLDRPAGRVLSAGADGRVRMWDFGAVNDAEP), 361 to 400 (HPAGAVAGLQLSARTHTALVASADGCLRALDYVSGAVLAE), 454 to 493 (AHKGAVAALAVSADGGRLVSAGEDGSVFFFDLTAQPQPGT), and 495 to 534 (VPGMPACGLLAPRAFIKLPSGSGTVTCGVWEAAEGGGVLL). The disordered stretch occupies residues 570-654 (QLVVPKPKRP…GGPSSTTGEL (85 aa)). A compositionally biased stretch (basic residues) spans 575-584 (KPKRPKKKKG). Basic and acidic residues-rich tracts occupy residues 585 to 596 (KNDGEEGDKEGG) and 604 to 628 (GEDKGGEQADGEGGSKEGGEEGRAA). The segment covering 629–641 (EEEEEEEADDEAD) has biased composition (acidic residues). WD repeat units follow at residues 649 to 692 (STTG…PLAA), 707 to 752 (AHAG…LHDM), and 753 to 791 (QSGRVSGLGLSHDGAYLVTAAADGALHLLALALPPELAP). Residues 821–850 (YTLEEEKQQAERDQQVREAEEKKLSVRQRL) adopt a coiled-coil conformation. Disordered stretches follow at residues 972-1003 (AAAGGEGGAGGRDTDARGKGSDTGGGPGGDAA) and 1426-1468 (KKKA…CPPG). Acidic residues predominate over residues 1434 to 1462 (GEDDYDSEEDEEDEDMGDDEVDDDDDGGE). Coiled-coil stretches lie at residues 1479 to 1517 (DLREKRLDEEDMIAEFTKTIEVLRKEKEALAKKQRLVEQ), 1567 to 1674 (LVFS…DAKI), and 1729 to 1758 (EERDALVALVNAQAAELDRLKGQLLALRRK).

Belongs to the CFAP44 family.

The protein resides in the cell projection. Its subcellular location is the cilium. It localises to the flagellum. The protein localises to the cytoplasm. It is found in the cytoskeleton. The protein resides in the flagellum axoneme. Its function is as follows. Flagellar protein involved in sperm flagellum axoneme organization and function. The chain is Cilia- and flagella-associated protein 44 from Chlamydomonas reinhardtii (Chlamydomonas smithii).